Reading from the N-terminus, the 197-residue chain is UPF0314 protein R03235 (197 aa).

Transmembrane regions (helical) follow at residues 16–36 (ALWL…QHLM) and 152–172 (LPVA…GYMV).

This sequence belongs to the UPF0314 family.

The protein localises to the cell membrane. This chain is UPF0314 protein R03235, found in Rhizobium meliloti (strain 1021) (Ensifer meliloti).